The chain runs to 746 residues: Probably inactive copalyl diphosphate synthase 3 (746 aa).

Residues 331-334 carry the DXDD motif; degenerated motif; sequence DVND.

The protein belongs to the terpene synthase family. Tpsc subfamily. In terms of tissue distribution, mostly expressed in stems, and, at low levels, in roots and leaves, but barely in flowers.

The sequence is that of Probably inactive copalyl diphosphate synthase 3 from Isodon rubescens (Rabdosia rubescens).